The following is a 296-amino-acid chain: Bifunctional protein FolD (296 aa).

Residues 168–170 (GRS), Ser-197, and Thr-238 contribute to the NADP(+) site.

This sequence belongs to the tetrahydrofolate dehydrogenase/cyclohydrolase family. Homodimer.

The catalysed reaction is (6R)-5,10-methylene-5,6,7,8-tetrahydrofolate + NADP(+) = (6R)-5,10-methenyltetrahydrofolate + NADPH. The enzyme catalyses (6R)-5,10-methenyltetrahydrofolate + H2O = (6R)-10-formyltetrahydrofolate + H(+). The protein operates within one-carbon metabolism; tetrahydrofolate interconversion. Its function is as follows. Catalyzes the oxidation of 5,10-methylenetetrahydrofolate to 5,10-methenyltetrahydrofolate and then the hydrolysis of 5,10-methenyltetrahydrofolate to 10-formyltetrahydrofolate. The chain is Bifunctional protein FolD from Porphyromonas gingivalis (strain ATCC BAA-308 / W83).